Consider the following 201-residue polypeptide: Ras-related protein Rab-1B (201 aa).

M1 carries the post-translational modification N-acetylmethionine. Residues S17, G18, V19, G20, K21, S22, C23, Y33, T34, E35, S36, S39, and T40 each coordinate GTP. S22 is a binding site for Mg(2+). The Switch 1 signature appears at 30-45; that stretch reads DDTYTESYISTIGVDF. Residues T40 and D63 each coordinate Mg(2+). Residues 64 to 83 form a switch 2 region; required for interaction with REP1/CHM region; that stretch reads TAGQERFRTITSSYYRGAHG. Residues 65 to 80 carry the Switch 2 motif; that stretch reads AGQERFRTITSSYYRG. Residues G66, N121, K122, D124, S151, A152, and K153 each contribute to the GTP site. The interval 174-201 is disordered; it reads GPGAASGGERPNLKIDSTPVKPASGGCC. S-geranylgeranyl cysteine attachment occurs at residues C200 and C201. At C201 the chain carries Cysteine methyl ester.

This sequence belongs to the small GTPase superfamily. Rab family. As to quaternary structure, interacts with MICAL1 and MICAL2. Interacts (GTP-bound form) with MICALCL, MICAL1 and MILCAL3. Interacts with GDI1; the interaction requires the GDP-bound state. Interacts with CHM/REP1; the interaction requires the GDP-bound form and is necessary for prenylation by GGTase II. Interacts with RabGAP TBC1D20. Interacts (in GDP-bound form) with lipid phosphatase MTMR6 (via GRAM domain); the interaction regulates MTMR6 recruitment to the endoplasmic reticulum-Golgi intermediate compartment. Interacts (in GDP-bound form) with lipid phosphatase MTMR7. It depends on Mg(2+) as a cofactor. Post-translationally, prenylated; by GGTase II, only after interaction of the substrate with Rab escort protein 1 (REP1).

It is found in the cytoplasm. Its subcellular location is the membrane. It localises to the preautophagosomal structure membrane. The protein localises to the perinuclear region. It carries out the reaction GTP + H2O = GDP + phosphate + H(+). Its activity is regulated as follows. Regulated by guanine nucleotide exchange factors (GEFs) which promote the exchange of bound GDP for free GTP. Regulated by GTPase activating proteins (GAPs) including TBC1D20 which increases the GTP hydrolysis activity. Inhibited by GDP dissociation inhibitors (GDIs). The small GTPases Rab are key regulators of intracellular membrane trafficking, from the formation of transport vesicles to their fusion with membranes. Rabs cycle between an inactive GDP-bound form and an active GTP-bound form that is able to recruit to membranes different set of downstream effectors directly responsible for vesicle formation, movement, tethering and fusion. Plays a role in the initial events of the autophagic vacuole development which take place at specialized regions of the endoplasmic reticulum. Regulates vesicular transport between the endoplasmic reticulum and successive Golgi compartments. Required to modulate the compacted morphology of the Golgi. Promotes the recruitment of lipid phosphatase MTMR6 to the endoplasmic reticulum-Golgi intermediate compartment. The chain is Ras-related protein Rab-1B (Rab1b) from Mus musculus (Mouse).